Here is a 132-residue protein sequence, read N- to C-terminus: MSFIKEFKEFAVKGNVIDMAVGVVIGSAFGKIVSSLVGDVIMPVVGVLTGGVNFTDLKITIKEAVGENAAVTINYGNFIQVTIDFLIIAFCIFLAIKAINQLKKPEKQEPKAPAEPNDEVKLLSEIRDLLKK.

Transmembrane regions (helical) follow at residues 10–30 and 76–96; these read FAVK…SAFG and GNFI…FLAI.

This sequence belongs to the MscL family. In terms of assembly, homopentamer.

It is found in the cell inner membrane. Its function is as follows. Channel that opens in response to stretch forces in the membrane lipid bilayer. May participate in the regulation of osmotic pressure changes within the cell. The polypeptide is Large-conductance mechanosensitive channel (Campylobacter hominis (strain ATCC BAA-381 / DSM 21671 / CCUG 45161 / LMG 19568 / NCTC 13146 / CH001A)).